The primary structure comprises 229 residues: Large ribosomal subunit protein uL1c (229 aa).

Belongs to the universal ribosomal protein uL1 family. As to quaternary structure, part of the 50S ribosomal subunit.

It is found in the plastid. The protein resides in the chloroplast. Functionally, binds directly to 23S rRNA. Might be involved in E site tRNA release (Potential). The chain is Large ribosomal subunit protein uL1c (rpl1) from Pyropia yezoensis (Susabi-nori).